The sequence spans 460 residues: 3-isopropylmalate dehydratase large subunit (460 aa).

Residues Cys338, Cys398, and Cys401 each coordinate [4Fe-4S] cluster.

This sequence belongs to the aconitase/IPM isomerase family. LeuC type 1 subfamily. As to quaternary structure, heterodimer of LeuC and LeuD. Requires [4Fe-4S] cluster as cofactor.

It carries out the reaction (2R,3S)-3-isopropylmalate = (2S)-2-isopropylmalate. Its pathway is amino-acid biosynthesis; L-leucine biosynthesis; L-leucine from 3-methyl-2-oxobutanoate: step 2/4. Catalyzes the isomerization between 2-isopropylmalate and 3-isopropylmalate, via the formation of 2-isopropylmaleate. This chain is 3-isopropylmalate dehydratase large subunit, found in Streptococcus gordonii (strain Challis / ATCC 35105 / BCRC 15272 / CH1 / DL1 / V288).